Here is a 391-residue protein sequence, read N- to C-terminus: MAKEKFERSKPHVNIGTIGHVDHGKTTLTAAITKQFGDFQDYASIDSAPEERARGITISTAHVEYETENRHYAHVDCPGHADYVKNMITGAAQMDGAILVVNAADGPMPQTREHILLGRQVGIPYMVVYMNKVDQVDDEELLELVEMEIRELLSSYEYPGDDIPVIPGSALAALEGRDDAIGKDSIDKLMAAVDEYIPTPARAVDQPFLMPIEDVFSISGRGTVVTGRVERGVINVGDEISIVGIRDTTKTTCTGVEMFRKLLDRGEAGDNIGALLRGVDREGVERGQVLCKPGSVDPHTKFEAEAYILTKEEGGRHTPFFANYRPQFYFRTTDVTGTVNLPAGTEMVMPGDNLKFEVELIAPIAMEDGLRFAIREGGRTVGAGVVAKIIE.

Positions 10–201 (KPHVNIGTIG…AVDEYIPTPA (192 aa)) constitute a tr-type G domain. Residues 19–26 (GHVDHGKT) form a G1 region. GTP is bound at residue 19-26 (GHVDHGKT). Thr26 is a Mg(2+) binding site. The interval 55 to 59 (GITIS) is G2. The tract at residues 76-79 (DCPG) is G3. Residues 76-80 (DCPGH) and 131-134 (NKVD) each bind GTP. The G4 stretch occupies residues 131–134 (NKVD). The interval 169–171 (SAL) is G5.

The protein belongs to the TRAFAC class translation factor GTPase superfamily. Classic translation factor GTPase family. EF-Tu/EF-1A subfamily. As to quaternary structure, monomer.

The protein resides in the cytoplasm. The catalysed reaction is GTP + H2O = GDP + phosphate + H(+). GTP hydrolase that promotes the GTP-dependent binding of aminoacyl-tRNA to the A-site of ribosomes during protein biosynthesis. This chain is Elongation factor Tu, found in Jannaschia sp. (strain CCS1).